The sequence spans 1311 residues: Protein PARALOG OF AIPP2 (1311 aa).

Disordered stretches follow at residues 1–21, 114–141, and 178–280; these read MADRRVGKRQMGQRGFSKVES, ISDDSGAAAMTSKPSLSGSRMKHKVSAS, and GNKD…EMVE. Basic and acidic residues predominate over residues 213-240; it reads NHDDRVSSEKGNFKEKSRPGGNKERQEP. Positions 258 to 270 are enriched in low complexity; sequence SKSSSSNSSAVSE. A PHD-type zinc finger spans residues 283-334; the sequence is VKVCDICGDAGREDLLAICSGCSDGAEHTYCMREMLDEVPEGDWLCEECAEE. Zn(2+) is bound by residues Cys286, Cys289, Cys301, Cys304, His310, Cys313, Cys328, and Cys331. A coiled-coil region spans residues 328–348; the sequence is CEECAEEAEKQKQEAKRKRET. 8 disordered regions span residues 369–390, 411–440, 460–701, 975–1050, 1059–1078, 1087–1138, 1152–1186, and 1249–1311; these read PDAKRQVVEASTGSPKKSILPR, NHQTSFSDDTESARSAGSQLQPPKGAFLKS, HPRQ…EDLN, TNPQ…PSKK, EAGVNHIPPQVTGSNSGDSL, EQEL…NPAN, NDGLCEGSPNKKLKTENGSSSLCRDTSGHDSGIMK, and LSRS…DLPR. Residues 411–431 show a composition bias toward polar residues; it reads NHQTSFSDDTESARSAGSQLQ. Over residues 460–472 the composition is skewed to basic and acidic residues; sequence HPRQKTGKEDTAL. A compositionally biased stretch (polar residues) spans 487–502; that stretch reads PSRTTDAGNSGGSDSQ. The segment covering 512–528 has biased composition (basic and acidic residues); the sequence is HSQEGKSLKQVKDRNRE. The segment covering 529–552 has biased composition (polar residues); it reads ANASASSIDQKLKSRGNSSVSHAN. The span at 553–566 shows a compositional bias: basic and acidic residues; sequence NNRDLKGLQSDGKR. Residues 569–607 show a composition bias toward polar residues; the sequence is LTKQVSNLSRNRLENSVVSGGDISTNEKCSASEQSSSQA. Basic and acidic residues predominate over residues 640 to 653; sequence VPREVGKKSKEAFS. Polar residues-rich tracts occupy residues 668-694, 977-988, and 1014-1025; these read PSSQKGGQTAESSDTSGVSDSDLSTTK, PQKNTSLPTSNV, and LRESSSNGIETR. Residues 1026-1050 show a composition bias toward basic and acidic residues; the sequence is NGTDARSHENPNNRESSIERSPSKK. Residues 1087–1096 show a composition bias toward basic and acidic residues; it reads EQELGGRKDL. Residues 1250 to 1263 are compositionally biased toward polar residues; the sequence is SRSSNSGEQSNNSM. A coiled-coil region spans residues 1256 to 1276; it reads GEQSNNSMNKEKQKADEEEED. Positions 1280 to 1289 are enriched in low complexity; the sequence is VAASLSLSLS.

As to quaternary structure, part of the BAH-PHD bivalent histone reader complex that contains AIPP2, PAIPP2 and AIPP3/BDT1; the BAH-PHD module associates with CPL2 to form the BAH-PHD-CPL2 complex (BPC) for transcriptional repression. Binds directly to AIPP3/BDT1 and CPL2, but not to AIPP2. As to expression, expressed ubiquitously.

In terms of biological role, together with AIPP2 and AIPP3/BDT1, cooperates to form a BAH-PHD bivalent histone reader complex able to read histone H3 lysine 27 trimethylation (H3K27me3) and low-methylated H3K4 histone marks in order to regulate transcription, especially to prevent early flowering; promotes AIPP3/BDT1 binding to H3K27me3. CPL2 is subsequently recruited to form a BAH-PHD-CPL2 complex (BPC) in order to silence several H3K27me3 and low-methylated H3K4 enriched loci, including AGO5, via the phosphorylation state-dependent inhibition of Pol II release from the transcriptional start site (e.g. Ser5P-Pol II dephosphorylation). The BPC complex represses flowering by inhibiting the expression of several genes, including AGL6, FT, FUL and SOC1. The polypeptide is Protein PARALOG OF AIPP2 (Arabidopsis thaliana (Mouse-ear cress)).